The primary structure comprises 421 residues: MPKQIDTILTNIGQLLTMESGGPRSGGSMQDLRVTEDAVIGISDGRIVFAGHQGAEEGYEARDIIDCGGRLVTPGLVDPHTHLVFGGSREKELNLKIQGMSYLDILAQGGGILSTVKDTKAASEEELIEKGLFHLGRMLSYGITTAEVKSGYGLDKDTELKQLTAAKKLGERQPVDLVTTFMGAHAIPPEYRNSPDEFLNRMLQLLPEIKEKGLAQFADIFTETGVFTVSQSRNYLKKASEAGFGLKIHADEIDPLGGAELAAELHAVSADHLVGASDEGIEKLAASGTIAVLLPGTTFYLGKHTYARAREMIDAGVRVSLATDFNPGSSPTENLQLIMSIAALHLKMTAEEIWHAVTVNAAYAIGKGEEAGQIKAGRAADIVIWEAPNYMYIPYHYGVNHVRRVIKNGKTVVSREGAALG.

Positions 80 and 82 each coordinate Fe(3+). Zn(2+) contacts are provided by His80 and His82. 3 residues coordinate 4-imidazolone-5-propanoate: Arg89, Tyr152, and His185. An N-formimidoyl-L-glutamate-binding site is contributed by Tyr152. His249 lines the Fe(3+) pocket. His249 provides a ligand contact to Zn(2+). A 4-imidazolone-5-propanoate-binding site is contributed by Glu252. Asp324 serves as a coordination point for Fe(3+). Asp324 contacts Zn(2+). N-formimidoyl-L-glutamate contacts are provided by Asn326 and Gly328. Residue Ser329 coordinates 4-imidazolone-5-propanoate.

The protein belongs to the metallo-dependent hydrolases superfamily. HutI family. Zn(2+) serves as cofactor. Requires Fe(3+) as cofactor.

It is found in the cytoplasm. It carries out the reaction 4-imidazolone-5-propanoate + H2O = N-formimidoyl-L-glutamate. It participates in amino-acid degradation; L-histidine degradation into L-glutamate; N-formimidoyl-L-glutamate from L-histidine: step 3/3. In terms of biological role, catalyzes the hydrolytic cleavage of the carbon-nitrogen bond in imidazolone-5-propanoate to yield N-formimidoyl-L-glutamate. It is the third step in the universal histidine degradation pathway. This is Imidazolonepropionase from Bacillus velezensis (strain DSM 23117 / BGSC 10A6 / LMG 26770 / FZB42) (Bacillus amyloliquefaciens subsp. plantarum).